Consider the following 521-residue polypeptide: Glutamate--cysteine ligase (521 aa).

This sequence belongs to the glutamate--cysteine ligase type 1 family. Type 1 subfamily.

The enzyme catalyses L-cysteine + L-glutamate + ATP = gamma-L-glutamyl-L-cysteine + ADP + phosphate + H(+). The protein operates within sulfur metabolism; glutathione biosynthesis; glutathione from L-cysteine and L-glutamate: step 1/2. This is Glutamate--cysteine ligase (gshA) from Buchnera aphidicola subsp. Baizongia pistaciae (strain Bp).